We begin with the raw amino-acid sequence, 275 residues long: DNA repair protein RecO (275 aa).

The disordered stretch occupies residues 1 to 38 (MTDEADADPQPFAAPPATGAPAADKPARKPRRAAPRTS). Low complexity predominate over residues 8–24 (DPQPFAAPPATGAPAAD).

It belongs to the RecO family.

Functionally, involved in DNA repair and RecF pathway recombination. This chain is DNA repair protein RecO, found in Burkholderia pseudomallei (strain 1710b).